The chain runs to 1400 residues: DNA-directed RNA polymerase subunit beta (1400 aa).

It belongs to the RNA polymerase beta chain family. In terms of assembly, the RNAP catalytic core consists of 2 alpha, 1 beta, 1 beta' and 1 omega subunit. When a sigma factor is associated with the core the holoenzyme is formed, which can initiate transcription.

It carries out the reaction RNA(n) + a ribonucleoside 5'-triphosphate = RNA(n+1) + diphosphate. DNA-dependent RNA polymerase catalyzes the transcription of DNA into RNA using the four ribonucleoside triphosphates as substrates. The polypeptide is DNA-directed RNA polymerase subunit beta (Acidiphilium cryptum (strain JF-5)).